The following is a 252-amino-acid chain: Imidazole glycerol phosphate synthase subunit HisF (252 aa).

Residues aspartate 11 and aspartate 130 contribute to the active site.

It belongs to the HisA/HisF family. In terms of assembly, heterodimer of HisH and HisF.

It is found in the cytoplasm. It catalyses the reaction 5-[(5-phospho-1-deoxy-D-ribulos-1-ylimino)methylamino]-1-(5-phospho-beta-D-ribosyl)imidazole-4-carboxamide + L-glutamine = D-erythro-1-(imidazol-4-yl)glycerol 3-phosphate + 5-amino-1-(5-phospho-beta-D-ribosyl)imidazole-4-carboxamide + L-glutamate + H(+). The protein operates within amino-acid biosynthesis; L-histidine biosynthesis; L-histidine from 5-phospho-alpha-D-ribose 1-diphosphate: step 5/9. Functionally, IGPS catalyzes the conversion of PRFAR and glutamine to IGP, AICAR and glutamate. The HisF subunit catalyzes the cyclization activity that produces IGP and AICAR from PRFAR using the ammonia provided by the HisH subunit. The chain is Imidazole glycerol phosphate synthase subunit HisF from Lacticaseibacillus paracasei (strain ATCC 334 / BCRC 17002 / CCUG 31169 / CIP 107868 / KCTC 3260 / NRRL B-441) (Lactobacillus paracasei).